Here is a 194-residue protein sequence, read N- to C-terminus: 3-isopropylmalate dehydratase small subunit (194 aa).

Belongs to the LeuD family. LeuD type 1 subfamily. Heterodimer of LeuC and LeuD.

The enzyme catalyses (2R,3S)-3-isopropylmalate = (2S)-2-isopropylmalate. It participates in amino-acid biosynthesis; L-leucine biosynthesis; L-leucine from 3-methyl-2-oxobutanoate: step 2/4. Catalyzes the isomerization between 2-isopropylmalate and 3-isopropylmalate, via the formation of 2-isopropylmaleate. This Leuconostoc mesenteroides subsp. mesenteroides (strain ATCC 8293 / DSM 20343 / BCRC 11652 / CCM 1803 / JCM 6124 / NCDO 523 / NBRC 100496 / NCIMB 8023 / NCTC 12954 / NRRL B-1118 / 37Y) protein is 3-isopropylmalate dehydratase small subunit.